The chain runs to 189 residues: Peptidyl-tRNA hydrolase (189 aa).

H15 lines the tRNA pocket. The active-site Proton acceptor is H20. Residues F66, N68, and N114 each contribute to the tRNA site.

Belongs to the PTH family. Monomer.

It is found in the cytoplasm. The catalysed reaction is an N-acyl-L-alpha-aminoacyl-tRNA + H2O = an N-acyl-L-amino acid + a tRNA + H(+). Functionally, hydrolyzes ribosome-free peptidyl-tRNAs (with 1 or more amino acids incorporated), which drop off the ribosome during protein synthesis, or as a result of ribosome stalling. Its function is as follows. Catalyzes the release of premature peptidyl moieties from peptidyl-tRNA molecules trapped in stalled 50S ribosomal subunits, and thus maintains levels of free tRNAs and 50S ribosomes. In Streptococcus equi subsp. equi (strain 4047), this protein is Peptidyl-tRNA hydrolase.